Reading from the N-terminus, the 306-residue chain is Mating type protein SmtA-1 (306 aa).

The segment at residues 49–104 is a DNA-binding region (alpha box); it reads APKKKVNGFMGFRSYYSPLFSQFPQKARSPFMTILWQHDPFHNEWDFMCSVYSSIR.

Belongs to the MATALPHA1 family.

It localises to the nucleus. In terms of biological role, mating type proteins are sequence specific DNA-binding proteins that act as master switches in fungal differentiation by controlling gene expression in a cell type-specific fashion. Transcriptional activator that induces the transcription of alpha-specific genes. The chain is Mating type protein SmtA-1 (SMTA1) from Sordaria macrospora (strain ATCC MYA-333 / DSM 997 / K(L3346) / K-hell).